The following is a 301-amino-acid chain: N-acetylmuramic acid 6-phosphate etherase (301 aa).

The SIS domain occupies 57-220 (ITEAFKKGGR…TTGAMIRSGK (164 aa)). Glutamate 85 functions as the Proton donor in the catalytic mechanism. The active site involves glutamate 116.

Belongs to the GCKR-like family. MurNAc-6-P etherase subfamily. In terms of assembly, homodimer.

The enzyme catalyses N-acetyl-D-muramate 6-phosphate + H2O = N-acetyl-D-glucosamine 6-phosphate + (R)-lactate. Its pathway is amino-sugar metabolism; 1,6-anhydro-N-acetylmuramate degradation. It functions in the pathway amino-sugar metabolism; N-acetylmuramate degradation. The protein operates within cell wall biogenesis; peptidoglycan recycling. Functionally, specifically catalyzes the cleavage of the D-lactyl ether substituent of MurNAc 6-phosphate, producing GlcNAc 6-phosphate and D-lactate. Together with AnmK, is also required for the utilization of anhydro-N-acetylmuramic acid (anhMurNAc) either imported from the medium or derived from its own cell wall murein, and thus plays a role in cell wall recycling. The polypeptide is N-acetylmuramic acid 6-phosphate etherase (Photobacterium profundum (strain SS9)).